The primary structure comprises 338 residues: Heme-dependent oxidative N-demethylase alpha subunit (338 aa).

Positions 38 and 194 each coordinate heme b. R224 serves as the catalytic Proton donor. Residue N226 participates in heme b binding. Position 266 (E266) interacts with dimethylamine. Residues Y317 and K318 each coordinate heme b.

As to quaternary structure, the heme-dependent oxidative N-demethylase (HODM) is a heterotetramer composed of a catalytic alpha subunit, a FMN/2Fe-2S-dependent oxidoreductase beta subunit, a gamma subunit with putative aminotransferase activity, and a delta subunit of unknown function.

It catalyses the reaction dimethylamine + NADPH + O2 + H(+) = methylamine + formaldehyde + NADP(+) + H2O. In terms of biological role, component of the heme-dependent oxidative N-demethylase (HODM) enzyme, that catalyzes the NADPH-dependent oxidation of dimethylamine (DMA) to methylamine (MA) and formaldehyde. Functions in bacterial methylated amine catabolism, linking alkylamine oxidation to the tetrahydrofolate C1 pool. The alpha subunit of HODM binds heme, oxygen and DMA, and serves as the site of the oxidative N-demethylase activity. This Ectopseudomonas mendocina (strain ymp) (Pseudomonas mendocina) protein is Heme-dependent oxidative N-demethylase alpha subunit.